The chain runs to 555 residues: Protein NRT1/ PTR FAMILY 2.1 (555 aa).

Helical transmembrane passes span 32-52, 68-88, 91-111, 127-147, 175-195, 205-225, 324-344, 369-389, 401-421, 437-457, 476-496, and 517-537; these read TLLG…VFLI, IVNG…DSFF, IPVI…LTLI, ILCQ…LALV, FFNW…TAIV, LGFG…ISGK, VLPL…QASM, VIVL…IYPI, LQQV…SAIV, VLWL…HYMA, SVTS…INLI, and WVLV…SWYF.

This sequence belongs to the major facilitator superfamily. Proton-dependent oligopeptide transporter (POT/PTR) (TC 2.A.17) family. As to expression, expressed in roots.

Its subcellular location is the membrane. Transporter involved in a passive nitrate efflux. The polypeptide is Protein NRT1/ PTR FAMILY 2.1 (NPF2.1) (Arabidopsis thaliana (Mouse-ear cress)).